Consider the following 644-residue polypeptide: Karyogamy protein KAR9 (644 aa).

S496 carries the post-translational modification Phosphoserine. Disordered stretches follow at residues 506-534 (SVPP…PDSF) and 606-644 (PNSQ…TPTY). 2 stretches are compositionally biased toward basic and acidic residues: residues 523–534 (SRGENEKSPDSF) and 634–644 (REGRLDKTPTY).

The protein localises to the nucleus. It localises to the cytoplasm. The protein resides in the cytoskeleton. Its function is as follows. Involved in karyogamy. Component of a cortical adaptor complex that orients cytoplasmic microtubules. It may be involved in anchoring cytoplasmic microtubules to the cell cortex. In Saccharomyces cerevisiae (strain ATCC 204508 / S288c) (Baker's yeast), this protein is Karyogamy protein KAR9 (KAR9).